A 365-amino-acid chain; its full sequence is Flagellar P-ring protein (365 aa).

The first 21 residues, 1 to 21, serve as a signal peptide directing secretion; sequence MIKRIISIVFLLLTLPQLALA.

It belongs to the FlgI family. As to quaternary structure, the basal body constitutes a major portion of the flagellar organelle and consists of four rings (L,P,S, and M) mounted on a central rod.

The protein resides in the periplasm. It localises to the bacterial flagellum basal body. Functionally, assembles around the rod to form the L-ring and probably protects the motor/basal body from shearing forces during rotation. In Geobacter metallireducens (strain ATCC 53774 / DSM 7210 / GS-15), this protein is Flagellar P-ring protein.